A 449-amino-acid polypeptide reads, in one-letter code: Myb family transcription factor PHL6 (449 aa).

The segment at 49 to 72 (PFIRSQSPDSPGQLWPKNSSQSTF) is disordered. Residues 238–298 (ANQKSRMRWT…HLQKYRLAKY (61 aa)) form the HTH myb-type domain. Positions 269 to 294 (PKAVKKLMNVEGLTIYHVKSHLQKYR) form a DNA-binding region, H-T-H motif. A disordered region spans residues 301–327 (EKKEEKRTDNSEEKKLALSKSEADEKK). The coiled coil stretch occupies residues 334–354 (TEALRMQMEVQKQLHEQLEVQ). The short motif at 347 to 352 (LHEQLE) is the LHEQLE element. A disordered region spans residues 376–449 (RKTGRWISSS…NIAESEDPKR (74 aa)). The span at 381-410 (WISSSSQTVLSPSDDSIPDSQNMSKTKASS) shows a compositional bias: polar residues.

It belongs to the MYB-CC family.

It is found in the nucleus. The polypeptide is Myb family transcription factor PHL6 (Arabidopsis thaliana (Mouse-ear cress)).